Consider the following 405-residue polypeptide: Na(+)-translocating NADH-quinone reductase subunit F (405 aa).

The chain crosses the membrane as a helical span at residues 3-23 (IILGIVMFTVIVLVLALMILF). One can recognise a 2Fe-2S ferredoxin-type domain in the interval 32 to 124 (GDITIKVNGE…DMDIEVPEEV (93 aa)). Positions 67, 73, 76, and 108 each coordinate [2Fe-2S] cluster. The region spanning 127–267 (VKKWECTVIS…SGPFGEFFAK (141 aa)) is the FAD-binding FR-type domain. The tract at residues 270 to 387 (DAEMVFIGGG…PIMNQSVIKM (118 aa)) is catalytic.

This sequence belongs to the NqrF family. As to quaternary structure, composed of six subunits; NqrA, NqrB, NqrC, NqrD, NqrE and NqrF. [2Fe-2S] cluster serves as cofactor. The cofactor is FAD.

The protein localises to the cell inner membrane. The enzyme catalyses a ubiquinone + n Na(+)(in) + NADH + H(+) = a ubiquinol + n Na(+)(out) + NAD(+). NQR complex catalyzes the reduction of ubiquinone-1 to ubiquinol by two successive reactions, coupled with the transport of Na(+) ions from the cytoplasm to the periplasm. The first step is catalyzed by NqrF, which accepts electrons from NADH and reduces ubiquinone-1 to ubisemiquinone by a one-electron transfer pathway. In Neisseria meningitidis serogroup B (strain ATCC BAA-335 / MC58), this protein is Na(+)-translocating NADH-quinone reductase subunit F.